A 447-amino-acid polypeptide reads, in one-letter code: MATILQNLPAGQKVGIAFSGGLDTSAALRWMKNKGALPYAYTANLGQPDEPDYDAIPRKAMEYGAEKARLIDCRTQLAHEGIAALQAGAFHVRTAGATYFNTTPLGRAVTGTMLVAAMKEDDVHIWGDGSTFKGNDIERFYRYGLLTNPSLKIYKPWLDQLFIDELGGRAEMSAFMTKEGFGYKMSAEKAYSTDSNMLGATHEAKDLEFLNSGMRIVNPIMGVAFWKDDVVVKAEEVSVRFEEGQPVALNGVEFNDPVELFLEANRIGGRHGLGMCDQIENRIIEAKSRGIYEAPGLALLHIAYERLVSGIHNEDTIEQYRMNGLKLGRLLYQGRWFDPQAIMLRETAQRWVARAVTGTVTLELRRGNDYSILNTESPNLTYAPERLSMEKVEDAPFSPADRIGQLTMRNLDIVDTRDKLGVYAQAGLLSLGGNAALAQLGDDSSRK.

Residues 17–25 (AFSGGLDTS) and Ala43 contribute to the ATP site. Position 99 (Tyr99) interacts with L-citrulline. 2 residues coordinate ATP: Gly129 and Thr131. L-aspartate is bound by residues Thr131, Asn135, and Asp136. Residue Asn135 coordinates L-citrulline. ATP is bound at residue Asp136. L-citrulline is bound by residues Arg139 and Ser192. Asp194 serves as a coordination point for ATP. 3 residues coordinate L-citrulline: Thr201, Glu203, and Glu280.

The protein belongs to the argininosuccinate synthase family. Type 2 subfamily. In terms of assembly, homotetramer.

The protein resides in the cytoplasm. The catalysed reaction is L-citrulline + L-aspartate + ATP = 2-(N(omega)-L-arginino)succinate + AMP + diphosphate + H(+). It functions in the pathway amino-acid biosynthesis; L-arginine biosynthesis; L-arginine from L-ornithine and carbamoyl phosphate: step 2/3. The protein is Argininosuccinate synthase of Paracidovorax citrulli (strain AAC00-1) (Acidovorax citrulli).